Consider the following 304-residue polypeptide: Non-specific ribonucleoside hydrolase RihC (304 aa).

His-233 is an active-site residue.

The protein belongs to the IUNH family. RihC subfamily.

Hydrolyzes both purine and pyrimidine ribonucleosides with a broad-substrate specificity. The chain is Non-specific ribonucleoside hydrolase RihC from Escherichia coli O45:K1 (strain S88 / ExPEC).